The sequence spans 63 residues: Large ribosomal subunit protein uL30 (63 aa).

It belongs to the universal ribosomal protein uL30 family. As to quaternary structure, part of the 50S ribosomal subunit.

The polypeptide is Large ribosomal subunit protein uL30 (Rickettsia felis (strain ATCC VR-1525 / URRWXCal2) (Rickettsia azadi)).